We begin with the raw amino-acid sequence, 439 residues long: Proline--tRNA ligase (439 aa).

Belongs to the class-II aminoacyl-tRNA synthetase family. ProS type 2 subfamily. As to quaternary structure, homodimer.

The protein resides in the cytoplasm. The enzyme catalyses tRNA(Pro) + L-proline + ATP = L-prolyl-tRNA(Pro) + AMP + diphosphate. In terms of biological role, catalyzes the attachment of proline to tRNA(Pro) in a two-step reaction: proline is first activated by ATP to form Pro-AMP and then transferred to the acceptor end of tRNA(Pro). This is Proline--tRNA ligase from Beijerinckia indica subsp. indica (strain ATCC 9039 / DSM 1715 / NCIMB 8712).